Here is a 184-residue protein sequence, read N- to C-terminus: ATP-dependent protease subunit HslV (184 aa).

Thr12 is an active-site residue. Residues Ala166, Cys169, and Thr172 each coordinate Na(+).

The protein belongs to the peptidase T1B family. HslV subfamily. A double ring-shaped homohexamer of HslV is capped on each side by a ring-shaped HslU homohexamer. The assembly of the HslU/HslV complex is dependent on binding of ATP.

Its subcellular location is the cytoplasm. The catalysed reaction is ATP-dependent cleavage of peptide bonds with broad specificity.. Its activity is regulated as follows. Allosterically activated by HslU binding. Its function is as follows. Protease subunit of a proteasome-like degradation complex believed to be a general protein degrading machinery. This Nitrobacter winogradskyi (strain ATCC 25391 / DSM 10237 / CIP 104748 / NCIMB 11846 / Nb-255) protein is ATP-dependent protease subunit HslV.